The chain runs to 419 residues: UDP-N-acetylglucosamine 1-carboxyvinyltransferase 1 (419 aa).

22-23 (KN) lines the phosphoenolpyruvate pocket. A UDP-N-acetyl-alpha-D-glucosamine-binding site is contributed by R92. Catalysis depends on C116, which acts as the Proton donor. C116 is subject to 2-(S-cysteinyl)pyruvic acid O-phosphothioketal. UDP-N-acetyl-alpha-D-glucosamine contacts are provided by residues 121–125 (RPIDL), D306, and I328.

This sequence belongs to the EPSP synthase family. MurA subfamily.

The protein resides in the cytoplasm. It catalyses the reaction phosphoenolpyruvate + UDP-N-acetyl-alpha-D-glucosamine = UDP-N-acetyl-3-O-(1-carboxyvinyl)-alpha-D-glucosamine + phosphate. The protein operates within cell wall biogenesis; peptidoglycan biosynthesis. Cell wall formation. Adds enolpyruvyl to UDP-N-acetylglucosamine. This is UDP-N-acetylglucosamine 1-carboxyvinyltransferase 1 from Streptococcus agalactiae serotype Ia (strain ATCC 27591 / A909 / CDC SS700).